Reading from the N-terminus, the 83-residue chain is Conotoxin p21a (83 aa).

4-hydroxyproline; partial occurs at positions 24 and 43. His-83 is subject to Histidine amide.

As to quaternary structure, may form a non-covalent dimer. Contains 5 disulfide bonds. As to expression, expressed by the venom duct.

It is found in the secreted. The sequence is that of Conotoxin p21a from Conus purpurascens (Purple cone).